The primary structure comprises 690 residues: Protein arginine N-methyltransferase 7 (690 aa).

2 SAM-dependent MTase PRMT-type domains span residues 14–357 (QNSW…YSLW) and 366–690 (TKSV…QKKL).

The protein belongs to the class I-like SAM-binding methyltransferase superfamily. Protein arginine N-methyltransferase family. PRMT7 subfamily.

In terms of biological role, essential arginine methyltransferase that can both catalyze the formation of omega-N monomethylarginine (MMA) and symmetrical dimethylarginine (sDMA). Specifically mediates the symmetrical dimethylation of arginine residues in the small nuclear ribonucleoproteins SmD1 and SmD3. This is Protein arginine N-methyltransferase 7 (Art7) from Drosophila erecta (Fruit fly).